Reading from the N-terminus, the 85-residue chain is Large ribosomal subunit protein bL27 (85 aa).

It belongs to the bacterial ribosomal protein bL27 family.

This chain is Large ribosomal subunit protein bL27, found in Pseudomonas fluorescens (strain SBW25).